The sequence spans 47 residues: Large ribosomal subunit protein bL27c-2 (47 aa).

This sequence belongs to the bacterial ribosomal protein bL27 family.

The protein resides in the plastid. It localises to the chloroplast. In Cyanidium caldarium (Red alga), this protein is Large ribosomal subunit protein bL27c-2.